The primary structure comprises 156 residues: Small ribosomal subunit protein uS7 (156 aa).

This sequence belongs to the universal ribosomal protein uS7 family. In terms of assembly, part of the 30S ribosomal subunit. Contacts proteins S9 and S11.

One of the primary rRNA binding proteins, it binds directly to 16S rRNA where it nucleates assembly of the head domain of the 30S subunit. Is located at the subunit interface close to the decoding center, probably blocks exit of the E-site tRNA. In Campylobacter fetus subsp. fetus (strain 82-40), this protein is Small ribosomal subunit protein uS7.